A 469-amino-acid chain; its full sequence is Cytoplasmic tRNA 2-thiolation protein 2 (469 aa).

Belongs to the CTU2/NCS2 family.

The protein localises to the cytoplasm. The protein operates within tRNA modification; 5-methoxycarbonylmethyl-2-thiouridine-tRNA biosynthesis. Plays a central role in 2-thiolation of mcm(5)S(2)U at tRNA wobble positions of tRNA(Lys), tRNA(Glu) and tRNA(Gln). May act by forming a heterodimer with NCS6 that ligates sulfur from thiocarboxylated URM1 onto the uridine of tRNAs at wobble position. Prior mcm(5) tRNA modification by the elongator complex is required for 2-thiolation. May also be involved in protein urmylation. The protein is Cytoplasmic tRNA 2-thiolation protein 2 of Candida glabrata (strain ATCC 2001 / BCRC 20586 / JCM 3761 / NBRC 0622 / NRRL Y-65 / CBS 138) (Yeast).